The chain runs to 165 residues: Ubiquitin-fold modifier-conjugating enzyme 1 (165 aa).

Catalysis depends on Cys-117, which acts as the Glycyl thioester intermediate.

It belongs to the ubiquitin-conjugating enzyme family. UFC1 subfamily.

Functionally, E2-like enzyme which forms an intermediate with UFM1 via a thioester linkage. This is Ubiquitin-fold modifier-conjugating enzyme 1 from Brugia malayi (Filarial nematode worm).